A 397-amino-acid chain; its full sequence is Putative gustatory receptor 85a (397 aa).

Over 1 to 56 (MYSLIEAQLLGGKLVNRVMASLRRIIQRSLGYFCALNGILDFNTDIGTGNLRRYRV) the chain is Cytoplasmic. The helical transmembrane segment at 57-77 (LFMYRLLHNFAVISLTLKFLF) threads the bilayer. Residues 78-90 (DFTDHFKYIESST) lie on the Extracellular side of the membrane. A helical membrane pass occupies residues 91–111 (LITVNFFTYFTLVFFALLSSM). At 112–151 (GSCYQWQNRILAVLKELKHQRDLSRHMGYRVPRSKQNSID) the chain is on the cytoplasmic side. The helical transmembrane segment at 152 to 172 (YLLFALTVLLILRLSIHLATF) threads the bilayer. Over 173 to 186 (TLSARMGFNHPCNC) the chain is Extracellular. The chain crosses the membrane as a helical span at residues 187 to 207 (FLPECMIFSMNYLLFAILAEI). The Cytoplasmic segment spans residues 208-268 (TRCWWSLQSG…RYVTLAYMAR (61 aa)). The helical transmembrane segment at 269–289 (NLWSGIVAGYLLVRFVIGNGL) threads the bilayer. Over 290 to 293 (QDVE) the chain is Extracellular. A helical membrane pass occupies residues 294–314 (LVYLVFSFITCIQPLMLSLLV). Residues 315–375 (NSMTSTTGSL…FRINRSLAFR (61 aa)) lie on the Cytoplasmic side of the membrane. A helical transmembrane segment spans residues 376–396 (SASLILVHVLYMVQSDYISIT). Position 397 (Asn397) is a topological domain, extracellular.

The protein belongs to the insect chemoreceptor superfamily. Gustatory receptor (GR) family. Gr22e subfamily.

The protein resides in the cell membrane. Functionally, probable gustatory receptor which mediates acceptance or avoidance behavior, depending on its substrates. This Drosophila melanogaster (Fruit fly) protein is Putative gustatory receptor 85a (Gr85a).